A 482-amino-acid polypeptide reads, in one-letter code: Retinoic acid receptor beta (482 aa).

The interval 1–114 (MSTSSHACPV…PLPPPRVYKP (114 aa)) is modulating. Residue serine 104 is modified to Phosphoserine. 2 NR C4-type zinc fingers span residues 115-135 (CFVCQDKSSGYHYGVSACEGC) and 151-175 (CHRDKNCVINKVTRNRCQYCRLQKC). The segment at residues 115 to 180 (CFVCQDKSSG…RLQKCFEVGM (66 aa)) is a DNA-binding region (nuclear receptor). Residues 181–209 (SKESVRNDRNKKKKEPSKQECTESYEMTA) are hinge. The NR LBD domain maps to 210-444 (ELDDLTEKIR…PLIQEMLENS (235 aa)). Residues 443–482 (NSEGHEPLTPSSSGNIAEHSPSVSPSSVENSGVSQSPLLQ) form a disordered region. A compositionally biased stretch (low complexity) spans 462–482 (SPSVSPSSVENSGVSQSPLLQ).

This sequence belongs to the nuclear hormone receptor family. NR1 subfamily. As to quaternary structure, homodimer. Heterodimer; with a RXR molecule. Binds DNA preferentially as a RAR/RXR heterodimer. Heterodimerizes (via NR LBD) with RXRA. Interacts weakly with NCOR2.

The protein localises to the nucleus. Its subcellular location is the cytoplasm. Functionally, receptor for retinoic acid. Retinoic acid receptors bind as heterodimers to their target response elements in response to their ligands, all-trans or 9-cis retinoic acid, and regulate gene expression in various biological processes. The RAR/RXR heterodimers bind to the retinoic acid response elements (RARE) composed of tandem 5'-AGGTCA-3' sites known as DR1-DR5. In the absence of ligand, acts mainly as an activator of gene expression due to weak binding to corepressors. The RXRA/RARB heterodimer can act as a repressor on the DR1 element and as an activator on the DR5 element. In concert with RARG, required for skeletal growth, matrix homeostasis and growth plate function. The chain is Retinoic acid receptor beta (Rarb) from Mus musculus (Mouse).